Consider the following 111-residue polypeptide: Large ribosomal subunit protein uL29 (111 aa).

Residues 1–85 (MTVAKELRQK…TKKTNEAAVN (85 aa)) form a large ribosomal subunit protein uL29 region. A unknown region spans residues 86–111 (AWKQHLEANKAKLLKSRAKREDASKK).

Belongs to the universal ribosomal protein uL29 family.

The chain is Large ribosomal subunit protein uL29 from Mycoplasma pneumoniae (strain ATCC 29342 / M129 / Subtype 1) (Mycoplasmoides pneumoniae).